Reading from the N-terminus, the 763-residue chain is Translation initiation factor IF-2, chloroplastic (763 aa).

3 disordered regions span residues 1–22, 52–122, and 149–168; these read MFLN…NNSS, IDKS…SNSA, and NNKI…DQSI. The segment covering 13-22 has biased composition (low complexity); sequence SSYSTNNNSS. A compositionally biased stretch (basic and acidic residues) spans 73–92; sequence RIDKKNKNFNKAHDLLDNKK. The span at 93–104 shows a compositional bias: basic residues; it reads NKNRQRKKIKNK. Over residues 151-168 the composition is skewed to polar residues; sequence KIPQQKKQQVASSIDQSI. One can recognise a tr-type G domain in the interval 261–429; sequence NRPPVVTILG…ILLLAELENL (169 aa). GTP-binding positions include 270 to 277, 316 to 320, and 370 to 373; these read GHVDHGKT, DTPGH, and SKID.

The protein belongs to the TRAFAC class translation factor GTPase superfamily. Classic translation factor GTPase family. IF-2 subfamily.

Its subcellular location is the plastid. It is found in the chloroplast. One of the essential components for the initiation of protein synthesis. Protects formylmethionyl-tRNA from spontaneous hydrolysis and promotes its binding to the 30S ribosomal subunits. Also involved in the hydrolysis of GTP during the formation of the 70S ribosomal complex. This chain is Translation initiation factor IF-2, chloroplastic (infB), found in Porphyra purpurea (Red seaweed).